Here is a 70-residue protein sequence, read N- to C-terminus: MTKHDHGLKEKVEGTIDKVKGEVKEVVGKVTDNKKLQAEGKWDKVKGTAKDTVGNVKEKVHEYKEHKENK.

This sequence belongs to the UPF0337 (CsbD) family.

In Bacillus thuringiensis subsp. konkukian (strain 97-27), this protein is UPF0337 protein BT9727_3385.